The sequence spans 94 residues: Transcription factor CPC (94 aa).

The tract at residues 1–10 is S1, required for cell-to-cell movements; it reads MFRSDKAEKM. The segment covering 1-11 has biased composition (basic and acidic residues); it reads MFRSDKAEKMD. Positions 1–25 are disordered; that stretch reads MFRSDKAEKMDKRRRRQSKAKASCS. The 51-residue stretch at 30–80 folds into the Myb-like domain; it reads SIEWEAVKMSEEEEDLISRMYKLVGDRWELIAGRIPGRTPEEIERYWLMKH. Residues 76 to 79 are S2, required for cell-to-cell movements and nuclear localization; that stretch reads WLMK.

As to quaternary structure, interacts with GL3 and BHLH2. Interacts with SIEL. In terms of tissue distribution, expressed in trichomes and in young developing leaves, as well as in root hair and stele cells (pericycle and vascular tissues). Expressed in epidermal root hairless cells (atrichoblasts) and moves to root hair cells (trichoblasts) by a cell-to-cell movement through plasmodesmata (at protein level).

Its subcellular location is the nucleus. Functionally, transcription factor. Determines the fate of epidermal cell differentiation. Represses trichome development by lateral inhibition. Together with GL3 or BHLH2, promotes the formation of hair developing cells (H position) in root epidermis, probably by inhibiting non-hair cell formation. Represses the expression of GL2 and WER in H cells. Positively regulates stomatal formation in the hypocotyl. The chain is Transcription factor CPC (CPC) from Arabidopsis thaliana (Mouse-ear cress).